The following is a 305-amino-acid chain: UDP-3-O-acyl-N-acetylglucosamine deacetylase (305 aa).

Zn(2+) contacts are provided by His79, His238, and Asp242. The active-site Proton donor is the His265.

This sequence belongs to the LpxC family. Zn(2+) is required as a cofactor.

The enzyme catalyses a UDP-3-O-[(3R)-3-hydroxyacyl]-N-acetyl-alpha-D-glucosamine + H2O = a UDP-3-O-[(3R)-3-hydroxyacyl]-alpha-D-glucosamine + acetate. The protein operates within glycolipid biosynthesis; lipid IV(A) biosynthesis; lipid IV(A) from (3R)-3-hydroxytetradecanoyl-[acyl-carrier-protein] and UDP-N-acetyl-alpha-D-glucosamine: step 2/6. Catalyzes the hydrolysis of UDP-3-O-myristoyl-N-acetylglucosamine to form UDP-3-O-myristoylglucosamine and acetate, the committed step in lipid A biosynthesis. This chain is UDP-3-O-acyl-N-acetylglucosamine deacetylase, found in Enterobacter sp. (strain 638).